The chain runs to 513 residues: Bifunctional pantoate ligase/cytidylate kinase (513 aa).

The pantoate--beta-alanine ligase stretch occupies residues M1 to L283. M30 to H37 provides a ligand contact to ATP. The active-site Proton donor is the H37. (R)-pantoate is bound at residue Q61. Q61 serves as a coordination point for beta-alanine. G150–D153 provides a ligand contact to ATP. Q156 contacts (R)-pantoate. ATP is bound by residues V179 and M187–R190. The tract at residues V284–G513 is cytidylate kinase.

It in the N-terminal section; belongs to the pantothenate synthetase family. In the C-terminal section; belongs to the cytidylate kinase family. Type 1 subfamily.

It is found in the cytoplasm. It catalyses the reaction (R)-pantoate + beta-alanine + ATP = (R)-pantothenate + AMP + diphosphate + H(+). It carries out the reaction CMP + ATP = CDP + ADP. The enzyme catalyses dCMP + ATP = dCDP + ADP. The protein operates within cofactor biosynthesis; (R)-pantothenate biosynthesis; (R)-pantothenate from (R)-pantoate and beta-alanine: step 1/1. Catalyzes the condensation of pantoate with beta-alanine in an ATP-dependent reaction via a pantoyl-adenylate intermediate. Its function is as follows. Catalyzes the transfer of a phosphate group from ATP to either CMP or dCMP to form CDP or dCDP and ADP, respectively. The sequence is that of Bifunctional pantoate ligase/cytidylate kinase from Synechocystis sp. (strain ATCC 27184 / PCC 6803 / Kazusa).